We begin with the raw amino-acid sequence, 584 residues long: Keratin, type I cytoskeletal 10 (584 aa).

A compositionally biased stretch (low complexity) spans 1 to 15 (MSVRYSSSKHYSSSR). Residues 1–24 (MSVRYSSSKHYSSSRSGGGGGGGG) form a disordered region. The segment at 1–145 (MSVRYSSSKH…GGDGGLLSGN (145 aa)) is head. Phosphoserine is present on residues Ser14, Ser16, Ser42, Ser53, Ser56, and Ser170. Residues 146–181 (EKVTMQNLNDRLASYLDKVRALEESNYELEGKIKEW) are coil 1A. Residues 146–460 (EKVTMQNLND…SLLEGEGSSG (315 aa)) enclose the IF rod domain. The interval 182-202 (YEKHGNSHQGEPRDYSKYYKT) is linker 1. The tract at residues 203-294 (IDDLKNQILN…KNHEEEMKDL (92 aa)) is coil 1B. The linker 12 stretch occupies residues 295 to 317 (RNVSTGDVNVEMNAAPGVDLTQL). Positions 318–456 (LNNMRSQYEQ…QTYRSLLEGE (139 aa)) are coil 2. The tract at residues 453–584 (LEGEGSSGGG…GESSSKGPRY (132 aa)) is disordered. Residues 457–563 (GSSGGGGRGG…GGGYGGGSSS (107 aa)) are compositionally biased toward gly residues. The tract at residues 457-584 (GSSGGGGRGG…GESSSKGPRY (128 aa)) is tail. Low complexity predominate over residues 564 to 584 (GGHKSSSSGSVGESSSKGPRY).

The protein belongs to the intermediate filament family. In terms of assembly, heterotetramer of two type I and two type II keratins. Heterodimer with KRT1. Two heterodimers of KRT1 and KRT10 form a heterotetramer. The KRT10 subunit in the heterotetramer is probably disulfide-linked. Interacts with PLEC isoform 1C, when in a heterodimer with KRT1. (Microbial infection) Interacts (via C-terminal tail domain) with the S.aureus clumping factor, clfB; this interaction probably mediates S.aureus attachment to the keratinized squamous epithelial cells from the nasal cavity. As to quaternary structure, (Microbial infection) Interacts (via the C-terminal tail domain) with S.pneumoniae serine-rich repeat protein PsrP; this interaction probably mediates S.pneumoniae adherence to lung tissue and subsequent pathogenesis. Neither protein has to be glycosylated for the interaction to occur. As to expression, seen in all suprabasal cell layers including stratum corneum. Expressed on the surface of lung cell lines. Localized on the surface of desquamated nasal epithelial cells (at protein level).

Its subcellular location is the secreted. The protein localises to the extracellular space. It localises to the cell surface. It is found in the cytoplasm. Its function is as follows. Plays a role in the establishment of the epidermal barrier on plantar skin. Involved in the maintenance of cell layer development and keratin filament bundles in suprabasal cells of the epithelium. (Microbial infection) Acts as a mediator of S.aureus adherence to desquamated nasal epithelial cells via clfB, and hence may play a role in nasal colonization. In terms of biological role, (Microbial infection) Binds S.pneumoniae PsrP, mediating adherence of the bacteria to lung cell lines. Reduction of levels of KRT10 keratin decrease adherence, overexpression increases adherence. Neither protein has to be glycosylated for the interaction to occur. This chain is Keratin, type I cytoskeletal 10 (KRT10), found in Homo sapiens (Human).